Here is a 361-residue protein sequence, read N- to C-terminus: Beta-hexosaminidase (361 aa).

Substrate-binding positions include D69, R77, R144, and 174 to 175; that span reads KH. Residue H187 is the Proton donor/acceptor of the active site. D258 functions as the Nucleophile in the catalytic mechanism.

Belongs to the glycosyl hydrolase 3 family. NagZ subfamily.

The protein localises to the cytoplasm. It catalyses the reaction Hydrolysis of terminal non-reducing N-acetyl-D-hexosamine residues in N-acetyl-beta-D-hexosaminides.. The protein operates within cell wall biogenesis; peptidoglycan recycling. Functionally, plays a role in peptidoglycan recycling by cleaving the terminal beta-1,4-linked N-acetylglucosamine (GlcNAc) from peptide-linked peptidoglycan fragments, giving rise to free GlcNAc, anhydro-N-acetylmuramic acid and anhydro-N-acetylmuramic acid-linked peptides. In Neisseria gonorrhoeae (strain NCCP11945), this protein is Beta-hexosaminidase.